A 322-amino-acid polypeptide reads, in one-letter code: Germ cell-specific gene 1-like protein (322 aa).

At 1-8 (MKTSRRGR) the chain is on the cytoplasmic side. A helical membrane pass occupies residues 9-29 (ALLAVALNLLALLFATTAFLT). Topologically, residues 30–122 (TYWCQGTQRV…FIDLAPASEK (93 aa)) are extracellular. Residues 123–143 (GVLWLSVVSEVLYILLLVVGF) form a helical membrane-spanning segment. The Cytoplasmic portion of the chain corresponds to 144–163 (SLMCLELVHSSSVIDGLKLN). The helical transmembrane segment at 164-184 (AFAAVFTVLSGLLGMVAHMMY) threads the bilayer. Topologically, residues 185–207 (TQVFQVTVSLGPEDWRPHSWDYG) are extracellular. Residues 208-228 (WSFCLAWGSFTCCMAASVTTL) traverse the membrane as a helical segment. Topologically, residues 229 to 322 (NSYTKTVIEF…RQCWVLGHWV (94 aa)) are cytoplasmic. At Ser274 the chain carries Phosphoserine.

Belongs to the GSG1 family. As to quaternary structure, component of the inner core of AMPAR complexes. AMPAR complexes consist of an inner core made of 4 pore-forming GluA/GRIA proteins (GRIA1, GRIA2, GRIA3 and GRIA4) and 4 major auxiliary subunits arranged in a twofold symmetry. One of the two pairs of distinct binding sites is occupied either by CNIH2, CNIH3 or CACNG2, CACNG3. The other harbors CACNG2, CACNG3, CACNG4, CACNG8 or GSG1L. This inner core of AMPAR complexes is complemented by outer core constituents binding directly to the GluA/GRIA proteins at sites distinct from the interaction sites of the inner core constituents. Outer core constituents include at least PRRT1, PRRT2, CKAMP44/SHISA9, FRRS1L and NRN1. The proteins of the inner and outer core serve as a platform for other, more peripherally associated AMPAR constituents. Alone or in combination, these auxiliary subunits control the gating and pharmacology of the AMPAR complexes and profoundly impact their biogenesis and protein processing. Expressed in the brain, including hippocampus (at protein level).

It localises to the cell membrane. It is found in the synapse. Its function is as follows. As a component of the inner core of AMPAR complexes, modifies AMPA receptor (AMPAR) gating. This chain is Germ cell-specific gene 1-like protein (Gsg1l), found in Mus musculus (Mouse).